Reading from the N-terminus, the 661-residue chain is UvrABC system protein B (661 aa).

Positions 25–178 (EGILKGEKFQ…DEVIRDLIRM (154 aa)) constitute a Helicase ATP-binding domain. 38 to 45 (GVTGSGKT) provides a ligand contact to ATP. The Beta-hairpin motif lies at 91–114 (YYDYYQPEAYIPETDTYIEKDSSI). The Helicase C-terminal domain occupies 429–591 (QIDHLIGEIR…IVPQTVRKGI (163 aa)). The UVR domain maps to 625 to 660 (EEYIKELEQEMKKLAIELEFEKAAKVRDKIFELKKL).

Belongs to the UvrB family. In terms of assembly, forms a heterotetramer with UvrA during the search for lesions. Interacts with UvrC in an incision complex.

It is found in the cytoplasm. Its function is as follows. The UvrABC repair system catalyzes the recognition and processing of DNA lesions. A damage recognition complex composed of 2 UvrA and 2 UvrB subunits scans DNA for abnormalities. Upon binding of the UvrA(2)B(2) complex to a putative damaged site, the DNA wraps around one UvrB monomer. DNA wrap is dependent on ATP binding by UvrB and probably causes local melting of the DNA helix, facilitating insertion of UvrB beta-hairpin between the DNA strands. Then UvrB probes one DNA strand for the presence of a lesion. If a lesion is found the UvrA subunits dissociate and the UvrB-DNA preincision complex is formed. This complex is subsequently bound by UvrC and the second UvrB is released. If no lesion is found, the DNA wraps around the other UvrB subunit that will check the other stand for damage. In Caldicellulosiruptor bescii (strain ATCC BAA-1888 / DSM 6725 / KCTC 15123 / Z-1320) (Anaerocellum thermophilum), this protein is UvrABC system protein B.